Consider the following 191-residue polypeptide: Signal peptidase complex catalytic subunit sec11 (191 aa).

The Cytoplasmic portion of the chain corresponds to methionine 1–glutamine 14. The chain crosses the membrane as a helical; Signal-anchor for type II membrane protein span at residues threonine 15 to tryptophan 33. Residues lysine 34–glutamate 191 are Lumenal-facing. Residues serine 53, histidine 92, and aspartate 133 each act as charge relay system in the active site. The segment at valine 177–leucine 188 is C-terminal short (CTS) helix.

It belongs to the peptidase S26B family. In terms of assembly, component of the signal peptidase complex (SPC) composed of a catalytic subunit SEC11 and three accessory subunits SPC1, SPC2 and SPC3. The complex induces a local thinning of the ER membrane which is used to measure the length of the signal peptide (SP) h-region of protein substrates. This ensures the selectivity of the complex towards h-regions shorter than 18-20 amino acids. SPC associates with the translocon complex.

Its subcellular location is the endoplasmic reticulum membrane. It carries out the reaction Cleavage of hydrophobic, N-terminal signal or leader sequences from secreted and periplasmic proteins.. In terms of biological role, catalytic component of the signal peptidase complex (SPC) which catalyzes the cleavage of N-terminal signal sequences from nascent proteins as they are translocated into the lumen of the endoplasmic reticulum. Specifically cleaves N-terminal signal peptides that contain a hydrophobic alpha-helix (h-region) shorter than 18-20 amino acids. In Aspergillus terreus (strain NIH 2624 / FGSC A1156), this protein is Signal peptidase complex catalytic subunit sec11 (sec11).